The chain runs to 211 residues: ATP phosphoribosyltransferase (211 aa).

It belongs to the ATP phosphoribosyltransferase family. Short subfamily. As to quaternary structure, heteromultimer composed of HisG and HisZ subunits.

The protein localises to the cytoplasm. It carries out the reaction 1-(5-phospho-beta-D-ribosyl)-ATP + diphosphate = 5-phospho-alpha-D-ribose 1-diphosphate + ATP. It participates in amino-acid biosynthesis; L-histidine biosynthesis; L-histidine from 5-phospho-alpha-D-ribose 1-diphosphate: step 1/9. Functionally, catalyzes the condensation of ATP and 5-phosphoribose 1-diphosphate to form N'-(5'-phosphoribosyl)-ATP (PR-ATP). Has a crucial role in the pathway because the rate of histidine biosynthesis seems to be controlled primarily by regulation of HisG enzymatic activity. The chain is ATP phosphoribosyltransferase from Pseudomonas entomophila (strain L48).